The chain runs to 1034 residues: AP-3 complex subunit delta (1034 aa).

HEAT repeat units lie at residues 35–72 (KYIS…LGYD), 143–180 (DLSR…RYPE), 181–217 (ALRP…KNPK), 219–255 (YLPL…LEPR), 258–297 (KKLI…GMPN), 299–337 (SASI…THPK), 338–374 (SVQA…KKNL), 376–414 (EIVK…LYVT), 415–452 (NFEW…RVPV), and 570–609 (NSAC…EIVQ). 4 disordered regions span residues 637–660 (DLDE…EHDK), 669–688 (QAGT…ELTP), 701–723 (EQSN…NADQ), and 758–1034 (QEQQ…KEIL). At Ser-683 the chain carries Phosphoserine. Thr-687 is subject to Phosphothreonine. Positions 769 to 784 (GKKKHKKGKKSKKAKN) are enriched in basic residues. 2 stretches are compositionally biased toward basic and acidic residues: residues 822–836 (KDGK…RALD) and 882–906 (KDKD…RKEA). The segment covering 928–942 (SATSNNNNTSTVLPD) has biased composition (low complexity). Residues 986–1003 (KVHKKKHKKEKSQRKEKK) are compositionally biased toward basic residues. A compositionally biased stretch (low complexity) spans 1007-1016 (ESASVSAIVS). Over residues 1025 to 1034 (GISTPSKEIL) the composition is skewed to polar residues.

The protein belongs to the adaptor complexes large subunit family. As to quaternary structure, adaptor protein complex 3 (AP-3) is a heterotetramer composed of two large chains (delta and beta3), a medium chain (mu3) and a small chain (sigma3).

Its subcellular location is the cytoplasmic vesicle. The protein localises to the clathrin-coated vesicle membrane. It is found in the golgi apparatus. Part of the AP-3 complex, an adapter-related complex which is not clathrin-associated. The complex is associated with the Golgi region as well as more peripheral structures. It facilitates the budding of vesicles from the Golgi membrane and may be directly involved in trafficking to lysosomes. Its function is as follows. May be a coat protein involved in the formation of specialized structures like pigment granules. The protein is AP-3 complex subunit delta (g) of Drosophila melanogaster (Fruit fly).